Consider the following 200-residue polypeptide: High mobility group protein B3 (200 aa).

Lys-3 carries the post-translational modification N6-acetyllysine. 2 DNA-binding regions (HMG box) span residues 9–79 (PKGK…KDYG) and 93–161 (PKRP…ADYK). The residue at position 23 (Cys-23) is a Cysteine sulfonic acid (-SO3H); alternate. A disulfide bridge links Cys-23 with Cys-45. An N6-acetyllysine mark is found at Lys-30 and Lys-43. Position 45 is a cysteine sulfonic acid (-SO3H); alternate (Cys-45). Residues 71-97 (YDREMKDYGPAKGGKKKKDPNAPKRPP) form a disordered region. Phosphoserine is present on Ser-98. Cys-104 is modified (cysteine sulfonic acid (-SO3H)). An N6-acetyllysine mark is found at Lys-112 and Lys-139. Residues 163–200 (KGKFDGAKGAAKVARKKVEEEDEEDEEEEEEEEEEEDE) form a disordered region. Acidic residues predominate over residues 182–200 (EEDEEDEEEEEEEEEEEDE).

It belongs to the HMGB family. In terms of processing, reduction/oxidation of cysteine residues Cys-23, Cys-45 and Cys-104 and a possible intramolecular disulfide bond involving Cys-23 and Cys-45 give rise to different redox forms with specific functional activities in various cellular compartments: 1- fully reduced HMGB3 (HMGB3C23hC45hC104h), 2- disulfide HMGB3 (HMGB3C23-C45C104h) and 3- sulfonyl HMGB3 (HMGB3C23soC45soC104so).

The protein localises to the nucleus. Its subcellular location is the chromosome. It is found in the cytoplasm. Functionally, multifunctional protein with various roles in different cellular compartments. May act in a redox sensitive manner. Associates with chromatin and binds DNA with a preference for non-canonical DNA structures such as single-stranded DNA. Can bend DNA and enhance DNA flexibility by looping thus providing a mechanism to promote activities on various gene promoters. Proposed to be involved in the innate immune response to nucleic acids by acting as a cytoplasmic promiscuous immunogenic DNA/RNA sensor. Negatively regulates B-cell and myeloid cell differentiation. In hematopoietic stem cells may regulate the balance between self-renewal and differentiation. Involved in negative regulation of canonical Wnt signaling. The chain is High mobility group protein B3 (HMGB3) from Bos taurus (Bovine).